The following is a 572-amino-acid chain: MALTIPRSQYVATYGPTVGDKVRLGDTDLWATIEQDFLTKGDECKFGGGKSVRDGMAQSSTATRDNPNVLDFALTNVMIIDAKLGIIKADIGIRDGRIVGIGQAGNPDTMDNVTPNMIIGASTEVHNGAHLIATAGGIDTHIHWICPQQAQHAIENGITTMIGGGSGPADGTHATTCTPGKFNIERMFQACEALPVNIGFFGKGNCSMLEPLKEQVVAGALGLKIHEDWGATPAVIDAALKVADEMDVQVAIHTDTLNESGFLEDTMKAINGRVIHTFHTEGAGGGHAPDIIKAAMYPNVLPASTNPNRPFTVNTIDEHLDMLMVCHHLDKRVPEDVAFADSRIRPETIAAEDILHDMGVFSIMSSDSQAMGRVGEVVTRTWQTADKMKAQRGALGDEGNDNFRIKRYIAKYTINPAIAHGISQYVGSLEVGKLADIVLWKPQFFGVKPEFVMKKGFISFAKMGDPNASIPTPQPVFYRPMFGANAKANTESAVYFVSQASVDANIKAQYGIQKETLAVKGCRDVGKKDLVHNNATPEITVDTERYEVRVDGEHITCEPATKVPLAQRYFLF.

Positions 136–572 (GGIDTHIHWI…VPLAQRYFLF (437 aa)) constitute a Urease domain. Ni(2+)-binding residues include histidine 141, histidine 143, and lysine 224. At lysine 224 the chain carries N6-carboxylysine. Residue histidine 226 participates in substrate binding. Ni(2+)-binding residues include histidine 253 and histidine 279. The active-site Proton donor is histidine 327. Aspartate 367 is a Ni(2+) binding site.

The protein belongs to the metallo-dependent hydrolases superfamily. Urease alpha subunit family. As to quaternary structure, heterotrimer of UreA (gamma), UreB (beta) and UreC (alpha) subunits. Three heterotrimers associate to form the active enzyme. Ni cation is required as a cofactor. Carboxylation allows a single lysine to coordinate two nickel ions.

The protein resides in the cytoplasm. The catalysed reaction is urea + 2 H2O + H(+) = hydrogencarbonate + 2 NH4(+). It participates in nitrogen metabolism; urea degradation; CO(2) and NH(3) from urea (urease route): step 1/1. The protein is Urease subunit alpha of Actinobacillus pleuropneumoniae (Haemophilus pleuropneumoniae).